The sequence spans 459 residues: Kelch-like protein terF (459 aa).

6 Kelch repeats span residues 92 to 144, 145 to 196, 198 to 248, 251 to 304, 306 to 354, and 355 to 405; these read STVV…LVGD, EIFV…VVDG, IYYL…TVVV, TIYL…IYRD, LYIL…TIGS, and LIFT…VYKG.

It functions in the pathway secondary metabolite biosynthesis. Functionally, kelch-like protein; part of the gene cluster that mediates the biosynthesis of terrein, a fungal metabolite with ecological, antimicrobial, antiproliferative, and antioxidative activities. The first step in the pathway is performed by the polyketide synthase terA that produces 4-hydroxy-6-methylpyranon (4-HMP), orsellinic acid (OA), and 2,3-dehydro-6-hydroxymellein (2,3-dehydro-6-HM) by condensing acetyl-CoA with two, three, or four malonyl-CoA units, respectively. 4-HMP and OA are not pathway intermediates, but are rather shunt or side products. 2,3-dehydro-6-HM is further converted to 6-hydroxymellein (6-HM) by the 6-hydroxymellein synthase terB. The monooxygenases terC and terD, the multicopper oxidase terE and the Kelch-like protein terF are then involved in the transformation of 6-HM to terrein. Even if they are co-regulated with the other terrein cluster genes, terH and terI seem to be dispensable for terrein production; whereas one or both of the 2 transporters terG and terJ are probably required for efficient secretion of metabolites. In Aspergillus terreus (strain NIH 2624 / FGSC A1156), this protein is Kelch-like protein terF.